The primary structure comprises 329 residues: DNA-directed RNA polymerase subunit alpha (329 aa).

Positions 1–235 (MQGSVTEFLK…EQLEAFVDLR (235 aa)) are alpha N-terminal domain (alpha-NTD). The tract at residues 249–329 (FDPILLRPVD…NWPPASIADE (81 aa)) is alpha C-terminal domain (alpha-CTD).

This sequence belongs to the RNA polymerase alpha chain family. In terms of assembly, homodimer. The RNAP catalytic core consists of 2 alpha, 1 beta, 1 beta' and 1 omega subunit. When a sigma factor is associated with the core the holoenzyme is formed, which can initiate transcription.

It catalyses the reaction RNA(n) + a ribonucleoside 5'-triphosphate = RNA(n+1) + diphosphate. Functionally, DNA-dependent RNA polymerase catalyzes the transcription of DNA into RNA using the four ribonucleoside triphosphates as substrates. The polypeptide is DNA-directed RNA polymerase subunit alpha (Pectobacterium atrosepticum (strain SCRI 1043 / ATCC BAA-672) (Erwinia carotovora subsp. atroseptica)).